A 770-amino-acid chain; its full sequence is Capsid protein (770 aa).

Disordered regions lie at residues Q645–S682 and W697–V717. The segment covering R646–I656 has biased composition (polar residues). A compositionally biased stretch (basic and acidic residues) spans R666–E681. Positions E703–V717 are enriched in low complexity.

The protein belongs to the anelloviridae capsid protein family.

It is found in the virion. Functionally, self-assembles to form an icosahedral capsid with a T=1 symmetry, about 30 nm in diameter, and consisting of 60 capsid proteins. The capsid encapsulates the genomic DNA. Capsid protein is involved in attachment and entry into the host cell. This is Capsid protein from Homo sapiens (Human).